Consider the following 96-residue polypeptide: Pollen allergen Dac g 3 (96 aa).

In terms of domain architecture, Expansin-like CBD spans 14–94; sequence KKLVLDIKYT…AFKIGTTYTP (81 aa).

Belongs to the expansin family. Expansin B subfamily.

It is found in the secreted. The polypeptide is Pollen allergen Dac g 3 (Dactylis glomerata (Orchard grass)).